The following is a 294-amino-acid chain: Glucosamine kinase GspK (294 aa).

An ATP-binding site is contributed by threonine 12. Residue aspartate 101 participates in substrate binding. Residue threonine 122 participates in ATP binding. Substrate-binding positions include 139-141 (GRE) and aspartate 146. An ATP-binding site is contributed by glycine 202.

The protein belongs to the eukaryotic-type N-acetylglucosamine kinase family.

The protein resides in the cytoplasm. The enzyme catalyses D-glucosamine + ATP = D-glucosamine 6-phosphate + ADP + H(+). ATP-dependent kinase, which is specific for glucosamine. Does not show kinase activity with any other sugar. The sequence is that of Glucosamine kinase GspK (gspK) from Vibrio cholerae serotype O1 (strain ATCC 39315 / El Tor Inaba N16961).